Reading from the N-terminus, the 141-residue chain is Putative nickel-responsive regulator (141 aa).

4 residues coordinate Ni(2+): histidine 80, histidine 91, histidine 93, and cysteine 99.

It belongs to the transcriptional regulatory CopG/NikR family. As to quaternary structure, homotetramer. Ni(2+) serves as cofactor.

Transcriptional regulator. In Methanocaldococcus jannaschii (strain ATCC 43067 / DSM 2661 / JAL-1 / JCM 10045 / NBRC 100440) (Methanococcus jannaschii), this protein is Putative nickel-responsive regulator.